Here is a 324-residue protein sequence, read N- to C-terminus: D-alanine--D-alanine ligase (324 aa).

The region spanning 112-312 is the ATP-grasp domain; sequence KAVLAAAGVT…FDQLVLWIVE (201 aa). 139–193 provides a ligand contact to ATP; that stretch reads LQPPYVVKPNAEGSSVGVFIIKEGANRPPEEVGAPSWTFGEEVMVEPYIQGMELA. Residues aspartate 265, glutamate 279, and asparagine 281 each contribute to the Mg(2+) site.

This sequence belongs to the D-alanine--D-alanine ligase family. The cofactor is Mg(2+). It depends on Mn(2+) as a cofactor.

It is found in the cytoplasm. It carries out the reaction 2 D-alanine + ATP = D-alanyl-D-alanine + ADP + phosphate + H(+). Its pathway is cell wall biogenesis; peptidoglycan biosynthesis. In terms of biological role, cell wall formation. The polypeptide is D-alanine--D-alanine ligase (Caulobacter vibrioides (strain ATCC 19089 / CIP 103742 / CB 15) (Caulobacter crescentus)).